The primary structure comprises 303 residues: D-alanine--D-alanine ligase (303 aa).

An ATP-grasp domain is found at 104–300 (KLLWNAVGLP…FERLVERVLE (197 aa)). 132–187 (IAKLGLPLFVKPASEGSSVGVSKVKTAEQLLPAIEEALKYDSIVLVEENLAGAEYS) lines the ATP pocket. Aspartate 254, glutamate 267, and asparagine 269 together coordinate Mg(2+).

It belongs to the D-alanine--D-alanine ligase family. Mg(2+) serves as cofactor. Requires Mn(2+) as cofactor.

It localises to the cytoplasm. It carries out the reaction 2 D-alanine + ATP = D-alanyl-D-alanine + ADP + phosphate + H(+). It participates in cell wall biogenesis; peptidoglycan biosynthesis. Cell wall formation. The protein is D-alanine--D-alanine ligase of Glaesserella parasuis serovar 5 (strain SH0165) (Haemophilus parasuis).